The following is a 441-amino-acid chain: MVLFSLVATHADIDLETVAQLSNGSSGIAASVLSGSPAVSGAVVLATCNRYEIYGEAPNTDDVEAARAALVAQISAQSGLAEPLVSRSFSTRTGPEVTRHLFAVSAGLDSAVVGEREIAGQVRRALITAQHEGTASSGLVRLFQAASKTAKDVGAQTALGSRGLSIVSVALDLATDLSENPDWSAKKVVVFGTGAYAGATMALLRERGCTDVSVFSSSGRAEGFVATRGGTALDADSLRPAVAAADVMIGCSGSDTRVEADELAQVRAGSAQPLIAIDLALTHDFDPAVGELNGVELLTLESVRLAAPQEQAESLAQASGIVKGAAKAFEQEREARSVDSAIVALRRHTMDVLDAEMEKVRARHGCTAAAEEVEFALRRMVKQLLHVPTVRARELAANGQQDDYVAALEALYGITVEQPGTAAPAAGQAECPVDHKGLESA.

Substrate is bound by residues 47–50 (TCNR), Ser110, 115–117 (ERE), and Gln121. Cys48 (nucleophile) is an active-site residue. Residue 192-197 (GTGAYA) coordinates NADP(+).

It belongs to the glutamyl-tRNA reductase family. In terms of assembly, homodimer.

It carries out the reaction (S)-4-amino-5-oxopentanoate + tRNA(Glu) + NADP(+) = L-glutamyl-tRNA(Glu) + NADPH + H(+). It participates in porphyrin-containing compound metabolism; protoporphyrin-IX biosynthesis; 5-aminolevulinate from L-glutamyl-tRNA(Glu): step 1/2. Its function is as follows. Catalyzes the NADPH-dependent reduction of glutamyl-tRNA(Glu) to glutamate 1-semialdehyde (GSA). In Pseudarthrobacter chlorophenolicus (strain ATCC 700700 / DSM 12829 / CIP 107037 / JCM 12360 / KCTC 9906 / NCIMB 13794 / A6) (Arthrobacter chlorophenolicus), this protein is Glutamyl-tRNA reductase.